The chain runs to 321 residues: Aspartate carbamoyltransferase catalytic subunit (321 aa).

Residues Arg-65 and Thr-66 each coordinate carbamoyl phosphate. L-aspartate is bound at residue Lys-93. Residues Arg-115, His-143, and Gln-146 each coordinate carbamoyl phosphate. Residues Arg-176 and Arg-230 each coordinate L-aspartate. Carbamoyl phosphate is bound by residues Gly-271 and Pro-272.

Belongs to the aspartate/ornithine carbamoyltransferase superfamily. ATCase family. As to quaternary structure, heterododecamer (2C3:3R2) of six catalytic PyrB chains organized as two trimers (C3), and six regulatory PyrI chains organized as three dimers (R2).

It catalyses the reaction carbamoyl phosphate + L-aspartate = N-carbamoyl-L-aspartate + phosphate + H(+). Its pathway is pyrimidine metabolism; UMP biosynthesis via de novo pathway; (S)-dihydroorotate from bicarbonate: step 2/3. In terms of biological role, catalyzes the condensation of carbamoyl phosphate and aspartate to form carbamoyl aspartate and inorganic phosphate, the committed step in the de novo pyrimidine nucleotide biosynthesis pathway. The polypeptide is Aspartate carbamoyltransferase catalytic subunit (Bartonella bacilliformis (strain ATCC 35685 / KC583 / Herrer 020/F12,63)).